The sequence spans 422 residues: Large ribosomal subunit protein uL4 (422 aa).

Ala-2 is subject to N-acetylalanine. Residue Lys-14 is modified to N6-acetyllysine. Arg-97 is subject to Omega-N-methylarginine. An N6-acetyllysine modification is found at Lys-106. Lys-239 is covalently cross-linked (Glycyl lysine isopeptide (Lys-Gly) (interchain with G-Cter in SUMO2)). Position 259 is an N6-acetyllysine (Lys-259). Thr-266 is modified (phosphothreonine). Ser-290 and Ser-295 each carry phosphoserine. A Citrulline modification is found at Arg-300. Residue Lys-327 forms a Glycyl lysine isopeptide (Lys-Gly) (interchain with G-Cter in SUMO2) linkage. Lys-333 and Lys-353 each carry N6-acetyllysine. The tract at residues 359 to 422 (EAKSDQKGVQ…PTSEEKKAAA (64 aa)) is disordered. Residue Lys-361 is modified to N6-acetyllysine; alternate. Lys-361 is covalently cross-linked (Glycyl lysine isopeptide (Lys-Gly) (interchain with G-Cter in SUMO1); alternate). Ser-362 is subject to Phosphoserine. 2 stretches are compositionally biased toward basic and acidic residues: residues 376 to 385 (NKEKKAVGDK) and 402 to 422 (PAAE…KAAA).

This sequence belongs to the universal ribosomal protein uL4 family. In terms of assembly, component of the large ribosomal subunit. May bind IPO9 with low affinity. Interacts with RBM3. Post-translationally, citrullinated by PADI4.

Its subcellular location is the cytoplasm. In terms of biological role, component of the large ribosomal subunit. The ribosome is a large ribonucleoprotein complex responsible for the synthesis of proteins in the cell. In Bos taurus (Bovine), this protein is Large ribosomal subunit protein uL4 (RPL4).